A 190-amino-acid chain; its full sequence is Peptidyl-prolyl cis-trans isomerase FKBP20-1 (190 aa).

At glycine 2 the chain carries N-acetylglycine. One can recognise a PPIase FKBP-type domain in the interval 32–121 (LPVVDVHYEG…IFEVELVACR (90 aa)). Residues 149–163 (AAAKEDDKKKREEAK) are compositionally biased toward basic and acidic residues. Residues 149 to 190 (AAAKEDDKKKREEAKAAAAARIQAKLDAKKGPGKGKGKGKAK) form a disordered region. The span at 179–190 (GPGKGKGKGKAK) shows a compositional bias: basic residues.

It belongs to the FKBP-type PPIase family.

The enzyme catalyses [protein]-peptidylproline (omega=180) = [protein]-peptidylproline (omega=0). Functionally, PPIases accelerate the folding of proteins. It catalyzes the cis-trans isomerization of proline imidic peptide bonds in oligopeptides. The protein is Peptidyl-prolyl cis-trans isomerase FKBP20-1 (FKBP20-1) of Arabidopsis thaliana (Mouse-ear cress).